The chain runs to 229 residues: PKHD-type hydroxylase OCAR_6723/OCA5_c13470 (229 aa).

One can recognise a Fe2OG dioxygenase domain in the interval 78–180 (HIFPPLFNRY…RVASFFWLQS (103 aa)). Fe cation is bound by residues His98, Asp100, and His161. Residue Arg171 coordinates 2-oxoglutarate.

The cofactor is Fe(2+). It depends on L-ascorbate as a cofactor.

The sequence is that of PKHD-type hydroxylase OCAR_6723/OCA5_c13470 from Afipia carboxidovorans (strain ATCC 49405 / DSM 1227 / KCTC 32145 / OM5) (Oligotropha carboxidovorans).